The chain runs to 344 residues: Mitochondrial genome maintenance exonuclease 1 (344 aa).

Residues aspartate 238, aspartate 251, and lysine 253 contribute to the active site. Serine 343 bears the Phosphoserine mark.

This sequence belongs to the MGME1 family.

The protein resides in the mitochondrion. Metal-dependent single-stranded DNA (ssDNA) exonuclease involved in mitochondrial genome maintenance. Has preference for 5'-3' exonuclease activity but is also capable of endonuclease activity on linear substrates. Necessary for maintenance of proper 7S DNA levels. Probably involved in mitochondrial DNA (mtDNA) repair, possibly via the processing of displaced DNA containing Okazaki fragments during RNA-primed DNA synthesis on the lagging strand or via processing of DNA flaps during long-patch base excision repair. Specifically binds 5-hydroxymethylcytosine (5hmC)-containing DNA in stem cells. In Homo sapiens (Human), this protein is Mitochondrial genome maintenance exonuclease 1.